The following is a 728-amino-acid chain: Myb-related protein A (728 aa).

The segment at 1–31 (MAGRARSEDEEEDGQFTEHDYDVSLQKGPKK) is disordered. HTH myb-type domains are found at residues 30–80 (KKPW…HKVL), 81–136 (SPEL…NPDV), and 137–187 (KKSS…KRKV). 3 DNA-binding regions (H-T-H motif) span residues 57 to 80 (WGVV…HKVL), 109 to 132 (WSII…HNHL), and 160 to 183 (WAEI…NSTM). Residues 230–293 (IPRYSSLSHD…RKRVPSGSSL (64 aa)) are transcriptional activation domain. A negative regulatory domain region spans residues 296-534 (SESYHMGESM…IRRSLMAVTP (239 aa)).

As to quaternary structure, component of the DREAM complex.

The protein localises to the nucleus. Functionally, transcription factor that specifically recognizes the sequence 5'-YAAC[GT]G-3'. Acts as a master regulator of male meiosis by promoting expression of piRNAs. The piRNA metabolic process mediates the repression of transposable elements during meiosis by forming complexes composed of piRNAs and Piwi proteins and governs the methylation and subsequent repression of transposons, which is essential for the germline integrity. The polypeptide is Myb-related protein A (mybl1) (Xenopus laevis (African clawed frog)).